A 103-amino-acid polypeptide reads, in one-letter code: Large ribosomal subunit protein bL21 (103 aa).

Belongs to the bacterial ribosomal protein bL21 family. As to quaternary structure, part of the 50S ribosomal subunit. Contacts protein L20.

Functionally, this protein binds to 23S rRNA in the presence of protein L20. The protein is Large ribosomal subunit protein bL21 of Parvibaculum lavamentivorans (strain DS-1 / DSM 13023 / NCIMB 13966).